A 1025-amino-acid polypeptide reads, in one-letter code: Dihydropyrimidine dehydrogenase [NADP(+)] (1025 aa).

The 4Fe-4S ferredoxin-type 1 domain maps to 69–100 (ERGALREAMRCLKCADAPCQKSCPTNLDIKSF). Residues Cys-79, Cys-82, Cys-87, and Cys-91 each coordinate [4Fe-4S] cluster. Val-129 is an FAD binding site. 4 residues coordinate [4Fe-4S] cluster: Cys-130, Cys-136, Cys-140, and Gln-156. Residues 194 to 198 (GAGPA), 218 to 226 (EKQEYVGGI), Arg-235, and Leu-261 contribute to the FAD site. Residues 340–343 (AGDT), 364–365 (RK), and Arg-371 contribute to the NADP(+) site. At Lys-384 the chain carries N6-acetyllysine. NADP(+) contacts are provided by residues 437–439 (AFG) and 481–487 (DVVGIAN). FAD is bound at residue 480 to 489 (GDVVGIANTT). Residues Ser-550 and 574-575 (KT) each bind FMN. Residues Asn-609 and 668-670 (NLS) contribute to the substrate site. Catalysis depends on Cys-671, which acts as the Proton acceptor. Residue Lys-709 coordinates FMN. 736–737 (NT) lines the substrate pocket. FMN-binding positions include Gly-767, 793–795 (TGG), and 816–817 (CS). 4Fe-4S ferredoxin-type domains are found at residues 944–976 (VVAV…FDPE) and 978–1007 (HLPT…MVSR). 8 residues coordinate [4Fe-4S] cluster: Cys-953, Cys-956, Cys-959, Cys-963, Cys-986, Cys-989, Cys-992, and Cys-996.

This sequence belongs to the dihydropyrimidine dehydrogenase family. In terms of assembly, homodimer. The cofactor is FAD. FMN serves as cofactor. Requires [4Fe-4S] cluster as cofactor.

The protein localises to the cytoplasm. The enzyme catalyses 5,6-dihydrouracil + NADP(+) = uracil + NADPH + H(+). It catalyses the reaction 5,6-dihydrothymine + NADP(+) = thymine + NADPH + H(+). It functions in the pathway amino-acid biosynthesis; beta-alanine biosynthesis. Its activity is regulated as follows. Inactivated by 5-iodouracil. In terms of biological role, involved in pyrimidine base degradation. Catalyzes the reduction of uracil and thymine. Also involved the degradation of the chemotherapeutic drug 5-fluorouracil. This chain is Dihydropyrimidine dehydrogenase [NADP(+)] (DPYD), found in Bos taurus (Bovine).